We begin with the raw amino-acid sequence, 128 residues long: Large ribosomal subunit protein bL12 (128 aa).

Belongs to the bacterial ribosomal protein bL12 family. In terms of assembly, homodimer. Part of the ribosomal stalk of the 50S ribosomal subunit. Forms a multimeric L10(L12)X complex, where L10 forms an elongated spine to which 2 to 4 L12 dimers bind in a sequential fashion. Binds GTP-bound translation factors.

In terms of biological role, forms part of the ribosomal stalk which helps the ribosome interact with GTP-bound translation factors. Is thus essential for accurate translation. This Trichormus variabilis (strain ATCC 29413 / PCC 7937) (Anabaena variabilis) protein is Large ribosomal subunit protein bL12.